The primary structure comprises 584 residues: Adenine deaminase (584 aa).

Belongs to the metallo-dependent hydrolases superfamily. Adenine deaminase family. Requires Mn(2+) as cofactor.

It carries out the reaction adenine + H2O + H(+) = hypoxanthine + NH4(+). This is Adenine deaminase from Methanococcoides burtonii (strain DSM 6242 / NBRC 107633 / OCM 468 / ACE-M).